The primary structure comprises 266 residues: Hydroxymethylpyrimidine/phosphomethylpyrimidine kinase (266 aa).

Position 43 (Q43) interacts with 4-amino-5-hydroxymethyl-2-methylpyrimidine.

It belongs to the ThiD family.

It carries out the reaction 4-amino-5-hydroxymethyl-2-methylpyrimidine + ATP = 4-amino-2-methyl-5-(phosphooxymethyl)pyrimidine + ADP + H(+). It catalyses the reaction 4-amino-2-methyl-5-(phosphooxymethyl)pyrimidine + ATP = 4-amino-2-methyl-5-(diphosphooxymethyl)pyrimidine + ADP. It functions in the pathway cofactor biosynthesis; thiamine diphosphate biosynthesis; 4-amino-2-methyl-5-diphosphomethylpyrimidine from 5-amino-1-(5-phospho-D-ribosyl)imidazole: step 2/3. It participates in cofactor biosynthesis; thiamine diphosphate biosynthesis; 4-amino-2-methyl-5-diphosphomethylpyrimidine from 5-amino-1-(5-phospho-D-ribosyl)imidazole: step 3/3. Catalyzes the phosphorylation of hydroxymethylpyrimidine phosphate (HMP-P) to HMP-PP, and of HMP to HMP-P. This is Hydroxymethylpyrimidine/phosphomethylpyrimidine kinase (thiD) from Rhizobium meliloti (strain 1021) (Ensifer meliloti).